The sequence spans 238 residues: tRNA (guanine-N(7)-)-methyltransferase (238 aa).

Positions 68, 93, 120, and 143 each coordinate S-adenosyl-L-methionine. Residue D143 is part of the active site. Substrate is bound by residues K147, D179, and 216 to 219; that span reads TKFE.

It belongs to the class I-like SAM-binding methyltransferase superfamily. TrmB family.

The enzyme catalyses guanosine(46) in tRNA + S-adenosyl-L-methionine = N(7)-methylguanosine(46) in tRNA + S-adenosyl-L-homocysteine. The protein operates within tRNA modification; N(7)-methylguanine-tRNA biosynthesis. Functionally, catalyzes the formation of N(7)-methylguanine at position 46 (m7G46) in tRNA. This chain is tRNA (guanine-N(7)-)-methyltransferase, found in Shewanella putrefaciens (strain CN-32 / ATCC BAA-453).